We begin with the raw amino-acid sequence, 124 residues long: NADH-quinone oxidoreductase subunit K (124 aa).

3 consecutive transmembrane segments (helical) span residues 28 to 48 (MEHG…GVMV), 52 to 72 (FLFM…AFIV), and 84 to 104 (IMFI…LAIL).

Belongs to the complex I subunit 4L family. In terms of assembly, NDH-1 is composed of 14 different subunits. Subunits NuoA, H, J, K, L, M, N constitute the membrane sector of the complex.

Its subcellular location is the cell inner membrane. It catalyses the reaction a quinone + NADH + 5 H(+)(in) = a quinol + NAD(+) + 4 H(+)(out). Functionally, NDH-1 shuttles electrons from NADH, via FMN and iron-sulfur (Fe-S) centers, to quinones in the respiratory chain. The immediate electron acceptor for the enzyme in this species is believed to be ubiquinone. Couples the redox reaction to proton translocation (for every two electrons transferred, four hydrogen ions are translocated across the cytoplasmic membrane), and thus conserves the redox energy in a proton gradient. The polypeptide is NADH-quinone oxidoreductase subunit K (Psychrobacter sp. (strain PRwf-1)).